The primary structure comprises 430 residues: Trigger factor (430 aa).

Residues 163-248 (GNIAIIDFKG…VKEIKVKEIP (86 aa)) form the PPIase FKBP-type domain.

The protein belongs to the FKBP-type PPIase family. Tig subfamily.

The protein localises to the cytoplasm. The enzyme catalyses [protein]-peptidylproline (omega=180) = [protein]-peptidylproline (omega=0). In terms of biological role, involved in protein export. Acts as a chaperone by maintaining the newly synthesized protein in an open conformation. Functions as a peptidyl-prolyl cis-trans isomerase. The chain is Trigger factor from Clostridium kluyveri (strain NBRC 12016).